The sequence spans 496 residues: UDP-N-acetylmuramoyl-L-alanyl-D-glutamate--2,6-diaminopimelate ligase (496 aa).

Ser-32 contributes to the UDP-N-acetyl-alpha-D-muramoyl-L-alanyl-D-glutamate binding site. Gly-116 to Thr-122 lines the ATP pocket. UDP-N-acetyl-alpha-D-muramoyl-L-alanyl-D-glutamate-binding positions include Thr-158 to Thr-159, Ser-185, Gln-191, and Arg-193. Residue Lys-225 is modified to N6-carboxylysine. Meso-2,6-diaminopimelate contacts are provided by residues Arg-389, Asp-413–Arg-416, Gly-464, and Glu-468. Positions Asp-413 to Arg-416 match the Meso-diaminopimelate recognition motif motif.

The protein belongs to the MurCDEF family. MurE subfamily. The cofactor is Mg(2+). In terms of processing, carboxylation is probably crucial for Mg(2+) binding and, consequently, for the gamma-phosphate positioning of ATP.

The protein localises to the cytoplasm. It catalyses the reaction UDP-N-acetyl-alpha-D-muramoyl-L-alanyl-D-glutamate + meso-2,6-diaminopimelate + ATP = UDP-N-acetyl-alpha-D-muramoyl-L-alanyl-gamma-D-glutamyl-meso-2,6-diaminopimelate + ADP + phosphate + H(+). Its pathway is cell wall biogenesis; peptidoglycan biosynthesis. Its function is as follows. Catalyzes the addition of meso-diaminopimelic acid to the nucleotide precursor UDP-N-acetylmuramoyl-L-alanyl-D-glutamate (UMAG) in the biosynthesis of bacterial cell-wall peptidoglycan. The protein is UDP-N-acetylmuramoyl-L-alanyl-D-glutamate--2,6-diaminopimelate ligase of Nostoc sp. (strain PCC 7120 / SAG 25.82 / UTEX 2576).